The sequence spans 206 residues: Large ribosomal subunit protein uL13z (206 aa).

Belongs to the universal ribosomal protein uL13 family.

This chain is Large ribosomal subunit protein uL13z (RPL13AA), found in Arabidopsis thaliana (Mouse-ear cress).